A 234-amino-acid chain; its full sequence is Octanoyltransferase (234 aa).

Residues 42–226 (PDTPDEFWVV…ELASLIGYET (185 aa)) form the BPL/LPL catalytic domain. Substrate is bound by residues 81 to 88 (RGGQVTYH), 157 to 159 (SLG), and 170 to 172 (GLA). The active-site Acyl-thioester intermediate is the cysteine 188.

Belongs to the LipB family.

It is found in the cytoplasm. The catalysed reaction is octanoyl-[ACP] + L-lysyl-[protein] = N(6)-octanoyl-L-lysyl-[protein] + holo-[ACP] + H(+). Its pathway is protein modification; protein lipoylation via endogenous pathway; protein N(6)-(lipoyl)lysine from octanoyl-[acyl-carrier-protein]: step 1/2. Functionally, catalyzes the transfer of endogenously produced octanoic acid from octanoyl-acyl-carrier-protein onto the lipoyl domains of lipoate-dependent enzymes. Lipoyl-ACP can also act as a substrate although octanoyl-ACP is likely to be the physiological substrate. The sequence is that of Octanoyltransferase from Aeromonas hydrophila subsp. hydrophila (strain ATCC 7966 / DSM 30187 / BCRC 13018 / CCUG 14551 / JCM 1027 / KCTC 2358 / NCIMB 9240 / NCTC 8049).